Here is a 226-residue protein sequence, read N- to C-terminus: ATP synthase subunit a (226 aa).

Transmembrane regions (helical) follow at residues 18 to 38 (FITGFFVVLTAVLMFFISLGA), 79 to 99 (LAGTIALYVFFSNMIGIIPGF), 105 to 125 (SWSFTLVLALIVFFYYHFEGI), 134 to 154 (FAHFAGPVKWLAPFMFPIEII), 179 to 199 (LIMLLLVPWAVPVAPFMVLFF), and 201 to 221 (GILQAFVFMILTYVYLAGAVL).

The protein belongs to the ATPase A chain family. In terms of assembly, F-type ATPases have 2 components, CF(1) - the catalytic core - and CF(0) - the membrane proton channel. CF(1) has five subunits: alpha(3), beta(3), gamma(1), delta(1), epsilon(1). CF(0) has three main subunits: a(1), b(2) and c(9-12). The alpha and beta chains form an alternating ring which encloses part of the gamma chain. CF(1) is attached to CF(0) by a central stalk formed by the gamma and epsilon chains, while a peripheral stalk is formed by the delta and b chains.

It is found in the cell inner membrane. Its function is as follows. Key component of the proton channel; it plays a direct role in the translocation of protons across the membrane. The sequence is that of ATP synthase subunit a from Helicobacter pylori (strain J99 / ATCC 700824) (Campylobacter pylori J99).